A 123-amino-acid polypeptide reads, in one-letter code: Small ribosomal subunit protein uS12cz/uS12cy (123 aa).

It belongs to the universal ribosomal protein uS12 family. Part of the 30S ribosomal subunit.

The protein localises to the plastid. It is found in the chloroplast. In terms of biological role, with S4 and S5 plays an important role in translational accuracy. Located at the interface of the 30S and 50S subunits. The chain is Small ribosomal subunit protein uS12cz/uS12cy (rps12-A) from Gossypium barbadense (Sea Island cotton).